Reading from the N-terminus, the 1343-residue chain is DNA-directed RNA polymerase subunit beta (1343 aa).

The protein belongs to the RNA polymerase beta chain family. The RNAP catalytic core consists of 2 alpha, 1 beta, 1 beta' and 1 omega subunit. When a sigma factor is associated with the core the holoenzyme is formed, which can initiate transcription.

It catalyses the reaction RNA(n) + a ribonucleoside 5'-triphosphate = RNA(n+1) + diphosphate. DNA-dependent RNA polymerase catalyzes the transcription of DNA into RNA using the four ribonucleoside triphosphates as substrates. The polypeptide is DNA-directed RNA polymerase subunit beta (Shewanella denitrificans (strain OS217 / ATCC BAA-1090 / DSM 15013)).